Here is a 210-residue protein sequence, read N- to C-terminus: N-(5'-phosphoribosyl)anthranilate isomerase (210 aa).

This sequence belongs to the TrpF family.

The enzyme catalyses N-(5-phospho-beta-D-ribosyl)anthranilate = 1-(2-carboxyphenylamino)-1-deoxy-D-ribulose 5-phosphate. Its pathway is amino-acid biosynthesis; L-tryptophan biosynthesis; L-tryptophan from chorismate: step 3/5. The sequence is that of N-(5'-phosphoribosyl)anthranilate isomerase from Pseudomonas fluorescens (strain SBW25).